Consider the following 550-residue polypeptide: Glucose-6-phosphate isomerase 2 (550 aa).

E357 (proton donor) is an active-site residue. Residues H388 and K514 contribute to the active site. A disordered region spans residues 527-550; that stretch reads DTGALGHDSSTNGLIRHYRERHGK.

Belongs to the GPI family.

The protein localises to the cytoplasm. It catalyses the reaction alpha-D-glucose 6-phosphate = beta-D-fructose 6-phosphate. It functions in the pathway carbohydrate biosynthesis; gluconeogenesis. Its pathway is carbohydrate degradation; glycolysis; D-glyceraldehyde 3-phosphate and glycerone phosphate from D-glucose: step 2/4. In terms of biological role, catalyzes the reversible isomerization of glucose-6-phosphate to fructose-6-phosphate. This chain is Glucose-6-phosphate isomerase 2, found in Chromobacterium violaceum (strain ATCC 12472 / DSM 30191 / JCM 1249 / CCUG 213 / NBRC 12614 / NCIMB 9131 / NCTC 9757 / MK).